The following is a 205-amino-acid chain: Adenylyl-sulfate kinase (205 aa).

31–38 contributes to the ATP binding site; sequence GLSGAGKS. Ser-105 serves as the catalytic Phosphoserine intermediate.

This sequence belongs to the APS kinase family.

The catalysed reaction is adenosine 5'-phosphosulfate + ATP = 3'-phosphoadenylyl sulfate + ADP + H(+). The protein operates within sulfur metabolism; hydrogen sulfide biosynthesis; sulfite from sulfate: step 2/3. Its function is as follows. Catalyzes the synthesis of activated sulfate. This Shewanella sp. (strain MR-4) protein is Adenylyl-sulfate kinase.